Reading from the N-terminus, the 480-residue chain is Thiamine biosynthesis bifunctional protein ThiM/ThiE (480 aa).

A hydroxyethylthiazole kinase region spans residues 1–287 (MSTLPERVRE…LYVLVSGATP (287 aa)). Residue methionine 40 participates in 5-(2-hydroxyethyl)-4-methylthiazole binding. 2 residues coordinate ATP: arginine 116 and threonine 164. A 5-(2-hydroxyethyl)-4-methylthiazole-binding site is contributed by glycine 191. The interval 288-480 (PDVLEAVLQA…VRRAKGEVSA (193 aa)) is thiamine-phosphate synthase. 4-amino-2-methyl-5-(diphosphooxymethyl)pyrimidine contacts are provided by residues 303-307 (QFREK) and asparagine 335. Positions 336 and 355 each coordinate Mg(2+). Position 374 (threonine 374) interacts with 4-amino-2-methyl-5-(diphosphooxymethyl)pyrimidine. Residue 400–402 (TPS) participates in 2-[(2R,5Z)-2-carboxy-4-methylthiazol-5(2H)-ylidene]ethyl phosphate binding. Residue lysine 403 participates in 4-amino-2-methyl-5-(diphosphooxymethyl)pyrimidine binding. Residues glycine 431 and 451-452 (IS) contribute to the 2-[(2R,5Z)-2-carboxy-4-methylthiazol-5(2H)-ylidene]ethyl phosphate site.

The protein in the N-terminal section; belongs to the Thz kinase family. In the C-terminal section; belongs to the thiamine-phosphate synthase family. Mg(2+) serves as cofactor.

The enzyme catalyses 5-(2-hydroxyethyl)-4-methylthiazole + ATP = 4-methyl-5-(2-phosphooxyethyl)-thiazole + ADP + H(+). The catalysed reaction is 2-[(2R,5Z)-2-carboxy-4-methylthiazol-5(2H)-ylidene]ethyl phosphate + 4-amino-2-methyl-5-(diphosphooxymethyl)pyrimidine + 2 H(+) = thiamine phosphate + CO2 + diphosphate. It catalyses the reaction 2-(2-carboxy-4-methylthiazol-5-yl)ethyl phosphate + 4-amino-2-methyl-5-(diphosphooxymethyl)pyrimidine + 2 H(+) = thiamine phosphate + CO2 + diphosphate. It carries out the reaction 4-methyl-5-(2-phosphooxyethyl)-thiazole + 4-amino-2-methyl-5-(diphosphooxymethyl)pyrimidine + H(+) = thiamine phosphate + diphosphate. The protein operates within cofactor biosynthesis; thiamine diphosphate biosynthesis; 4-methyl-5-(2-phosphoethyl)-thiazole from 5-(2-hydroxyethyl)-4-methylthiazole: step 1/1. It participates in cofactor biosynthesis; thiamine diphosphate biosynthesis; thiamine phosphate from 4-amino-2-methyl-5-diphosphomethylpyrimidine and 4-methyl-5-(2-phosphoethyl)-thiazole: step 1/1. Its function is as follows. Condenses 4-methyl-5-(beta-hydroxyethyl)thiazole monophosphate (THZ-P) and 2-methyl-4-amino-5-hydroxymethyl pyrimidine pyrophosphate (HMP-PP) to form thiamine monophosphate (TMP). The sequence is that of Thiamine biosynthesis bifunctional protein ThiM/ThiE (thiM/thiE) from Symbiobacterium thermophilum (strain DSM 24528 / JCM 14929 / IAM 14863 / T).